The sequence spans 178 residues: Hypoxanthine phosphoribosyltransferase (178 aa).

Residues arginine 43 and glycine 44 each coordinate diphosphate. GMP is bound at residue glutamate 99. Glutamate 99 lines the IMP pocket. 2 residues coordinate Mg(2+): glutamate 99 and aspartate 100. Catalysis depends on aspartate 103, which acts as the Proton acceptor. Residues 103–108 (DSGNTL), lysine 131, and aspartate 159 contribute to the GMP site. Residues 103–108 (DSGNTL) and lysine 131 each bind IMP. Residue arginine 165 participates in diphosphate binding.

The protein belongs to the purine/pyrimidine phosphoribosyltransferase family. As to quaternary structure, homotetramer. Requires Mg(2+) as cofactor.

Its subcellular location is the cytoplasm. It carries out the reaction IMP + diphosphate = hypoxanthine + 5-phospho-alpha-D-ribose 1-diphosphate. The catalysed reaction is GMP + diphosphate = guanine + 5-phospho-alpha-D-ribose 1-diphosphate. Its pathway is purine metabolism; IMP biosynthesis via salvage pathway; IMP from hypoxanthine: step 1/1. In terms of biological role, purine salvage pathway enzyme which catalyzes the transfer of the ribosyl-5-phosphate group from 5-phospho-alpha-D-ribose 1-diphosphate (PRPP) to the N9 position of hypoxanthine to yield IMP (inosine 5'-monophosphate). To a lesser extent, can also act on guanine leading to GMP, but shows a highly less efficient activity with xanthine. The chain is Hypoxanthine phosphoribosyltransferase (hpt) from Salmonella typhimurium (strain LT2 / SGSC1412 / ATCC 700720).